The primary structure comprises 482 residues: Cobyric acid synthase (482 aa).

Residues Ala-243–Phe-430 form the GATase cobBQ-type domain. The active-site Nucleophile is the Cys-325. His-422 is a catalytic residue.

It belongs to the CobB/CobQ family. CobQ subfamily.

It participates in cofactor biosynthesis; adenosylcobalamin biosynthesis. Its function is as follows. Catalyzes amidations at positions B, D, E, and G on adenosylcobyrinic A,C-diamide. NH(2) groups are provided by glutamine, and one molecule of ATP is hydrogenolyzed for each amidation. This chain is Cobyric acid synthase, found in Ruegeria sp. (strain TM1040) (Silicibacter sp.).